We begin with the raw amino-acid sequence, 751 residues long: Protein WEAK CHLOROPLAST MOVEMENT UNDER BLUE LIGHT-like 3 (751 aa).

A Phosphoserine modification is found at serine 113. Coiled coils occupy residues 165 to 558 and 588 to 647; these read ERRK…ALQE and QALE…KARD. Basic and acidic residues-rich tracts occupy residues 455-467 and 625-689; these read RERQ…KQKE and NREM…RNKE. 2 disordered regions span residues 455–479 and 625–751; these read RERQ…DKDA and NREM…HSHK. Low complexity predominate over residues 704–723; sequence GSSSNNTGGSTTTNNNNLTP.

Belongs to the WEB family.

This chain is Protein WEAK CHLOROPLAST MOVEMENT UNDER BLUE LIGHT-like 3 (WEL3), found in Arabidopsis thaliana (Mouse-ear cress).